The primary structure comprises 317 residues: Annexin A13 (317 aa).

A lipid anchor (N-myristoyl glycine) is attached at Gly-2. Annexin repeat units lie at residues 15 to 86 (FDAD…ALLD), 87 to 158 (RPNE…SLLQ), 170 to 242 (ELAG…TIVR), and 246 to 317 (DLEG…ALLH).

It belongs to the annexin family. As to quaternary structure, monomer and homodimer. Detected on the tips of microvilli in small intestine (at protein level).

The protein resides in the apical cell membrane. It is found in the cell membrane. Its subcellular location is the cytoplasmic vesicle. Functionally, binds to membranes enriched in phosphatidylserine or phosphatidylglycerol in a calcium-dependent manner. Half-maximal membrane binding requires about 60 uM calcium. Does not bind to membranes that lack phospholipids with an acidic headgroup. This is Annexin A13 (Anxa13) from Mus musculus (Mouse).